Here is a 76-residue protein sequence, read N- to C-terminus: Exodeoxyribonuclease 7 small subunit (76 aa).

It belongs to the XseB family. In terms of assembly, heterooligomer composed of large and small subunits.

The protein resides in the cytoplasm. The enzyme catalyses Exonucleolytic cleavage in either 5'- to 3'- or 3'- to 5'-direction to yield nucleoside 5'-phosphates.. Its function is as follows. Bidirectionally degrades single-stranded DNA into large acid-insoluble oligonucleotides, which are then degraded further into small acid-soluble oligonucleotides. The chain is Exodeoxyribonuclease 7 small subunit from Legionella pneumophila subsp. pneumophila (strain Philadelphia 1 / ATCC 33152 / DSM 7513).